The chain runs to 284 residues: 4-diphosphocytidyl-2-C-methyl-D-erythritol kinase (284 aa).

The active site involves K14. 98-108 (PMGGGLGGGSS) lines the ATP pocket. Residue D140 is part of the active site.

This sequence belongs to the GHMP kinase family. IspE subfamily.

It carries out the reaction 4-CDP-2-C-methyl-D-erythritol + ATP = 4-CDP-2-C-methyl-D-erythritol 2-phosphate + ADP + H(+). It functions in the pathway isoprenoid biosynthesis; isopentenyl diphosphate biosynthesis via DXP pathway; isopentenyl diphosphate from 1-deoxy-D-xylulose 5-phosphate: step 3/6. Catalyzes the phosphorylation of the position 2 hydroxy group of 4-diphosphocytidyl-2C-methyl-D-erythritol. This is 4-diphosphocytidyl-2-C-methyl-D-erythritol kinase from Shewanella sp. (strain W3-18-1).